A 291-amino-acid polypeptide reads, in one-letter code: MSRNYPRLDIETFGRHLITTGDLDPIYTALVRAEEAGDFSVPQLCRWLLGYWCYYHAGVASFLSEKEGEEFWHWMMVAARNEEETPAGGRWPRGHERRHYRAKIAVDSVTSLQARYGDRPENMALYVGARATEDERLPFRTVSARAQEHNGFGPWIGFKIADMMDRVMEVPVDFDNAAVFMFKDPEKAAMMLWEQREAHKYPENAKPKREAILSGVADYLIGRFADLAAPPLSDRPVNIQEVETVLCKWKSHMNGHYPLWNDIREINGGLEPWAGRCSAARAFLNHMPKEQ.

E243 is an active-site residue.

Belongs to the thymidine aminotransferase family.

It carries out the reaction 5-phosphomethyl-dUMP in DNA + glycine = 5-N(alpha)-glycyl-dTMP in DNA + phosphate. Its function is as follows. Transfers glycine to 5-phosphomethyl-2'-deoxyuridine (5-PmdU) to produce 5-Nalpha-glycinylthymidine (Nalpha-GlyT) as a step in the pathway leading to thymidine hypermodifications in the viral genome. As a final result of the pathway of hypermodification, 5-aminoethyl-2'-deoxyuridine (5-NedU) substitutes for about 30% of thymidines in the viral DNA. These modifications probably prevent degradation of viral genome by the host restriction-modification antiviral defense system. This chain is Glycinyltransferase, found in Pseudomonas phage M6.